The following is a 531-amino-acid chain: GPI alpha-1,2-mannosyltransferase 3 (531 aa).

Residue Asn84 is glycosylated (N-linked (GlcNAc...) asparagine). The next 3 helical transmembrane spans lie at 99–119 (GLRGFSYPLMFAAIYKVLYLL), 124–144 (VWFLIWIPRLAQAVLSGIADV), and 174–196 (YCATRTLTNTMEAVLSTFALYYY). An N-linked (GlcNAc...) asparagine glycan is attached at Asn204. A run of 6 helical transmembrane segments spans residues 210–230 (LICVALAFLIRPTAVILWIPL), 249–269 (YLPIGILTLAASLTVDRIFFG), 303–323 (GVPVILCTHLPFFIHGCMVTP), 328–348 (ILLVAVAWTVLTYSALSHKEF), 350–370 (FIYPVLPVCMVFCGFSFSNLK), and 375–395 (AAVGFLVLSNLFPALYTGLIH). Residues Asn414 and Asn476 are each glycosylated (N-linked (GlcNAc...) asparagine).

Belongs to the glycosyltransferase 22 family. PIGB subfamily.

It localises to the endoplasmic reticulum membrane. It participates in glycolipid biosynthesis; glycosylphosphatidylinositol-anchor biosynthesis. Alpha-1,2-mannosyltransferase that catalyzes the transfer of the third mannose, via an alpha-1,2 bond, from a dolichol-phosphate-mannose (Dol-P-Man) to an alpha-D-Man-(1-&gt;6)-2-PEtn-alpha-D-Man-(1-&gt;4)-alpha-D-GlcN-(1-&gt;6)-(1-radyl,2-acyl-sn-glycero-3-phospho)-2-acyl-inositol intermediate to generate an alpha-D-Man-(1-&gt;2)-alpha-D-Man-(1-&gt;6)-2-PEtn-alpha-D-Man-(1-&gt;4)-alpha-D-GlcN-(1-&gt;6)-(1-radyl,2-acyl-sn-glycero-3-phospho)-2-acyl-inositol (also termed H6) and participates in the nineth step of the glycosylphosphatidylinositol-anchor biosynthesis. May also add the third mannose to an alpha-D-Man-(1-&gt;6)-alpha-D-Man-(1-&gt;4)-alpha-D-GlcN-(1-&gt;6)-(1-radyl,2-acyl-sn-glycero-3-phospho)-2-acyl-inositol (also termed H3) intermediate generating an alpha-D-Man-(1-&gt;2)-alpha-D-Man-(1-&gt;6)-alpha-D-Man-(1-&gt;4)-alpha-D-GlcN-(1-&gt;6)-(1-radyl,2-acyl-sn-glycero-3-phospho)-2-acyl-inositol (also termed H4). This chain is GPI alpha-1,2-mannosyltransferase 3, found in Xenopus laevis (African clawed frog).